The primary structure comprises 148 residues: Arginine repressor (148 aa).

This sequence belongs to the ArgR family.

It is found in the cytoplasm. It participates in amino-acid biosynthesis; L-arginine biosynthesis [regulation]. Functionally, regulates arginine biosynthesis genes. In Prosthecochloris aestuarii (strain DSM 271 / SK 413), this protein is Arginine repressor.